We begin with the raw amino-acid sequence, 254 residues long: Pimeloyl-[acyl-carrier protein] methyl ester esterase (254 aa).

Residues 14–242 (LVLLHGWGMN…ASHAPFISHP (229 aa)) enclose the AB hydrolase-1 domain. Residues Trp-20, 82–83 (SL), and 143–147 (FLAIQ) contribute to the substrate site. Ser-82 functions as the Nucleophile in the catalytic mechanism. Active-site residues include Asp-207 and His-235. Residue His-235 coordinates substrate.

This sequence belongs to the AB hydrolase superfamily. Carboxylesterase BioH family. Monomer.

The protein localises to the cytoplasm. The catalysed reaction is 6-carboxyhexanoyl-[ACP] methyl ester + H2O = 6-carboxyhexanoyl-[ACP] + methanol + H(+). Its pathway is cofactor biosynthesis; biotin biosynthesis. In terms of biological role, the physiological role of BioH is to remove the methyl group introduced by BioC when the pimeloyl moiety is complete. It allows to synthesize pimeloyl-ACP via the fatty acid synthetic pathway through the hydrolysis of the ester bonds of pimeloyl-ACP esters. This Aeromonas hydrophila subsp. hydrophila (strain ATCC 7966 / DSM 30187 / BCRC 13018 / CCUG 14551 / JCM 1027 / KCTC 2358 / NCIMB 9240 / NCTC 8049) protein is Pimeloyl-[acyl-carrier protein] methyl ester esterase.